A 65-amino-acid polypeptide reads, in one-letter code: UPF0370 protein Ent638_2968 (65 aa).

The helical transmembrane segment at 4 to 24 (LSKYWWILVLVFLVGVLLNVI) threads the bilayer. Residues 39–65 (KPELPPHRDFNDKWDDDDNWPKKDQKK) are disordered. Basic and acidic residues predominate over residues 42 to 65 (LPPHRDFNDKWDDDDNWPKKDQKK).

The protein belongs to the UPF0370 family.

Its subcellular location is the cell membrane. This is UPF0370 protein Ent638_2968 from Enterobacter sp. (strain 638).